The sequence spans 67 residues: DNA-directed RNA polymerase subunit omega (67 aa).

This sequence belongs to the RNA polymerase subunit omega family. In terms of assembly, the RNAP catalytic core consists of 2 alpha, 1 beta, 1 beta' and 1 omega subunit. When a sigma factor is associated with the core the holoenzyme is formed, which can initiate transcription.

It catalyses the reaction RNA(n) + a ribonucleoside 5'-triphosphate = RNA(n+1) + diphosphate. Promotes RNA polymerase assembly. Latches the N- and C-terminal regions of the beta' subunit thereby facilitating its interaction with the beta and alpha subunits. This is DNA-directed RNA polymerase subunit omega from Paracidovorax citrulli (strain AAC00-1) (Acidovorax citrulli).